Consider the following 509-residue polypeptide: ATP synthase subunit alpha, mitochondrial (509 aa).

171–178 (GDRQTGKT) is a binding site for ATP.

This sequence belongs to the ATPase alpha/beta chains family. As to quaternary structure, F-type ATPases have 2 components, CF(1) - the catalytic core - and CF(0) - the membrane proton channel. CF(1) has five subunits: alpha(3), beta(3), gamma(1), delta(1), epsilon(1). CF(0) has three main subunits: a, b and c.

Its subcellular location is the mitochondrion. The protein localises to the mitochondrion inner membrane. Its function is as follows. Mitochondrial membrane ATP synthase (F(1)F(0) ATP synthase or Complex V) produces ATP from ADP in the presence of a proton gradient across the membrane which is generated by electron transport complexes of the respiratory chain. F-type ATPases consist of two structural domains, F(1) - containing the extramembraneous catalytic core, and F(0) - containing the membrane proton channel, linked together by a central stalk and a peripheral stalk. During catalysis, ATP synthesis in the catalytic domain of F(1) is coupled via a rotary mechanism of the central stalk subunits to proton translocation. Subunits alpha and beta form the catalytic core in F(1). Rotation of the central stalk against the surrounding alpha(3)beta(3) subunits leads to hydrolysis of ATP in three separate catalytic sites on the beta subunits. Subunit alpha does not bear the catalytic high-affinity ATP-binding sites. The polypeptide is ATP synthase subunit alpha, mitochondrial (ATPA) (Oryza sativa subsp. indica (Rice)).